The chain runs to 264 residues: MDSRPIGFLDSGVGGLTVVKEMFRQLPEEEVIFIGDQARAPYGPRPAQQIREFTWQMVNFLLTKNVKMIVIACNTATAVAWQEIKEKLDIPVLGVILPGASAAIKSTNSGKVGIIGTPMTVKSDAYRQKIQALSPNTAVVSLACPKFVPIVESNQMSSSLAKKVVYETLSPLVGKLDTLILGCTHYPLLRPIIQNVMGAEVKLIDSGAETVRDISVLLNYFEINHNWQNKHGGHHFYTTASPKGFKEIAEQWLSQEINVERIVL.

Residues 10 to 11 (DS) and 42 to 43 (YG) contribute to the substrate site. Catalysis depends on cysteine 73, which acts as the Proton donor/acceptor. 74–75 (NT) is a binding site for substrate. Catalysis depends on cysteine 183, which acts as the Proton donor/acceptor. 184 to 185 (TH) provides a ligand contact to substrate.

Belongs to the aspartate/glutamate racemases family.

It carries out the reaction L-glutamate = D-glutamate. It participates in cell wall biogenesis; peptidoglycan biosynthesis. Provides the (R)-glutamate required for cell wall biosynthesis. The protein is Glutamate racemase of Streptococcus agalactiae serotype III (strain NEM316).